Consider the following 460-residue polypeptide: uncharacterized protein (460 aa).

The segment at residues 1 to 33 is a signal peptide (tat-type signal); the sequence is MKESNSRREFLSQSGKMVTAAALFGTSVPLAHA.

It belongs to the metallo-dependent hydrolases superfamily. Exported by the Tat system. The position of the signal peptide cleavage has not been experimentally proven. Can also be exported by the Sec system.

This is an uncharacterized protein from Escherichia coli (strain K12).